The sequence spans 341 residues: UDP-3-O-(3-hydroxymyristoyl)glucosamine N-acyltransferase (341 aa).

Residue His-239 is the Proton acceptor of the active site.

Belongs to the transferase hexapeptide repeat family. LpxD subfamily. As to quaternary structure, homotrimer.

It catalyses the reaction a UDP-3-O-[(3R)-3-hydroxyacyl]-alpha-D-glucosamine + a (3R)-hydroxyacyl-[ACP] = a UDP-2-N,3-O-bis[(3R)-3-hydroxyacyl]-alpha-D-glucosamine + holo-[ACP] + H(+). The enzyme catalyses UDP-3-O-[(3R)-3-hydroxytetradecanoyl]-alpha-D-glucosamine + (3R)-hydroxytetradecanoyl-[ACP] = UDP-2-N,3-O-bis[(3R)-3-hydroxytetradecanoyl]-alpha-D-glucosamine + holo-[ACP] + H(+). The protein operates within glycolipid biosynthesis; lipid IV(A) biosynthesis; lipid IV(A) from (3R)-3-hydroxytetradecanoyl-[acyl-carrier-protein] and UDP-N-acetyl-alpha-D-glucosamine: step 3/6. Functionally, catalyzes the N-acylation of UDP-3-O-(hydroxytetradecanoyl)glucosamine using 3-hydroxytetradecanoyl-ACP as the acyl donor. Is involved in the biosynthesis of lipid A, a phosphorylated glycolipid that anchors the lipopolysaccharide to the outer membrane of the cell. The chain is UDP-3-O-(3-hydroxymyristoyl)glucosamine N-acyltransferase from Salmonella paratyphi A (strain ATCC 9150 / SARB42).